We begin with the raw amino-acid sequence, 366 residues long: tRNA/tmRNA (uracil-C(5))-methyltransferase (366 aa).

S-adenosyl-L-methionine is bound by residues Gln190, Tyr218, Asn223, Glu239, and Asp299. Catalysis depends on Cys324, which acts as the Nucleophile. Glu358 acts as the Proton acceptor in catalysis.

Belongs to the class I-like SAM-binding methyltransferase superfamily. RNA M5U methyltransferase family. TrmA subfamily.

It catalyses the reaction uridine(54) in tRNA + S-adenosyl-L-methionine = 5-methyluridine(54) in tRNA + S-adenosyl-L-homocysteine + H(+). It carries out the reaction uridine(341) in tmRNA + S-adenosyl-L-methionine = 5-methyluridine(341) in tmRNA + S-adenosyl-L-homocysteine + H(+). Its function is as follows. Dual-specificity methyltransferase that catalyzes the formation of 5-methyluridine at position 54 (m5U54) in all tRNAs, and that of position 341 (m5U341) in tmRNA (transfer-mRNA). This is tRNA/tmRNA (uracil-C(5))-methyltransferase from Cronobacter sakazakii (strain ATCC BAA-894) (Enterobacter sakazakii).